Reading from the N-terminus, the 208-residue chain is Pyridoxine/pyridoxamine 5'-phosphate oxidase (208 aa).

FMN contacts are provided by residues 53–58 (RTVLLK), 68–69 (YS), lysine 75, and glutamine 100. Lysine 58 contributes to the substrate binding site. The substrate site is built by tyrosine 118, arginine 122, and serine 126. FMN-binding positions include 135 to 136 (QS) and tryptophan 180. 186–188 (RLH) contributes to the substrate binding site. Arginine 190 is an FMN binding site.

It belongs to the pyridoxamine 5'-phosphate oxidase family. Homodimer. FMN serves as cofactor.

It carries out the reaction pyridoxamine 5'-phosphate + O2 + H2O = pyridoxal 5'-phosphate + H2O2 + NH4(+). The enzyme catalyses pyridoxine 5'-phosphate + O2 = pyridoxal 5'-phosphate + H2O2. It participates in cofactor metabolism; pyridoxal 5'-phosphate salvage; pyridoxal 5'-phosphate from pyridoxamine 5'-phosphate: step 1/1. The protein operates within cofactor metabolism; pyridoxal 5'-phosphate salvage; pyridoxal 5'-phosphate from pyridoxine 5'-phosphate: step 1/1. Functionally, catalyzes the oxidation of either pyridoxine 5'-phosphate (PNP) or pyridoxamine 5'-phosphate (PMP) into pyridoxal 5'-phosphate (PLP). In Xylella fastidiosa (strain 9a5c), this protein is Pyridoxine/pyridoxamine 5'-phosphate oxidase.